The chain runs to 338 residues: tRNA methyltransferase 10 homolog A (338 aa).

Disordered stretches follow at residues 1–91 (MSSE…DRKR) and 296–338 (RVEG…SVPH). Serine 22 is modified (phosphoserine). Residues 52–80 (KQWEEQRELRKQKRKEKRKRKQLERQCQP) are a coiled coil. Over residues 61 to 73 (RKQKRKEKRKRKQ) the composition is skewed to basic residues. Residues 88–279 (DRKRIRRDVV…TILPQRKGAV (192 aa)) form the SAM-dependent MTase TRM10-type domain. Residues 308–328 (EENRHELDSTHEEEKQDKENS) show a composition bias toward basic and acidic residues. The segment covering 329-338 (TESTVNSVPH) has biased composition (polar residues). The residue at position 335 (serine 335) is a Phosphoserine.

It belongs to the class IV-like SAM-binding methyltransferase superfamily. TRM10 family. As to quaternary structure, interacts with tRNA.

The protein localises to the nucleus. The protein resides in the nucleolus. The catalysed reaction is guanosine(9) in tRNA + S-adenosyl-L-methionine = N(1)-methylguanosine(9) in tRNA + S-adenosyl-L-homocysteine + H(+). Its function is as follows. S-adenosyl-L-methionine-dependent guanine N(1)-methyltransferase that catalyzes the formation of N(1)-methylguanine at position 9 (m1G9) in tRNAs. Probably not able to catalyze formation of N(1)-methyladenine at position 9 (m1A9) in tRNAs. This is tRNA methyltransferase 10 homolog A (TRMT10A) from Bos taurus (Bovine).